We begin with the raw amino-acid sequence, 434 residues long: Probable tRNA pseudouridine synthase D (434 aa).

D93 (nucleophile) is an active-site residue. Residues 169-396 (GTPNYFGQQR…SAGSRRAILL (228 aa)) enclose the TRUD domain.

This sequence belongs to the pseudouridine synthase TruD family.

The catalysed reaction is uridine(13) in tRNA = pseudouridine(13) in tRNA. Functionally, could be responsible for synthesis of pseudouridine from uracil-13 in transfer RNAs. The protein is Probable tRNA pseudouridine synthase D of Halobacterium salinarum (strain ATCC 29341 / DSM 671 / R1).